A 769-amino-acid polypeptide reads, in one-letter code: Scarecrow-like protein 14 (769 aa).

Disordered regions lie at residues 1–23, 128–157, 279–320, and 364–388; these read MGSY…DFDL, PSSS…GAFS, TEKK…ERSN, and TAQS…DSKK. The GRAS domain occupies 384–765; it reads NDSKKETADL…RIVYASSLWV (382 aa). The leucine repeat I (LRI) stretch occupies residues 391 to 451; sequence ADLRTLLVLC…EARLAGTGTQ (61 aa). Residues 470–536 form a VHIID region; the sequence is YQTYMSVCPF…GGSPKLRITG (67 aa). Positions 501 to 505 match the VHIID motif; it reads IHIID. The interval 552–584 is leucine repeat II (LRII); sequence ETGHRLARYCQRHNVPFEYNAIAQKWETIQVED. The segment at 593 to 687 is PFYRE; the sequence is VVVNSLFRFR…KEFYGREIVN (95 aa). Positions 690 to 765 are SAW; it reads ACEGTERVER…RIVYASSLWV (76 aa).

This sequence belongs to the GRAS family. Expressed in roots, shoots, flowers and siliques.

Its subcellular location is the nucleus. In terms of biological role, probable transcription factor involved in plant development. This Arabidopsis thaliana (Mouse-ear cress) protein is Scarecrow-like protein 14 (SCL14).